Here is a 325-residue protein sequence, read N- to C-terminus: uncharacterized protein (325 aa).

The segment at 1–75 (MSQPPEHPGN…PPPGYPTHLQ (75 aa)) is disordered. Pro residues-rich tracts occupy residues 24 to 39 (YPPPGYGAPPPPPGYG) and 50 to 70 (YNAPPPPPGYGPPPGPPPPGY). 4 helical membrane passes run 96–116 (AVTLVVPVLAYAVALAAVIGA), 153–173 (IVMFLGYIALFALVLYMHAGI), 205–225 (LLIVALTFIGGLLCVIPGLIF), and 273–293 (LVGELLCFVGMLIGIPVAALI).

The protein resides in the cell membrane. This is an uncharacterized protein from Mycobacterium tuberculosis (strain CDC 1551 / Oshkosh).